Reading from the N-terminus, the 691-residue chain is MLKMVTFFQGFPGQQSVPGTLNFAVSPQKPRSTSEAESETSMSEASSEDLMPSPEAPDGEEESAKKKEKKSKGLANMFSVFTKGKKKKKDQPRLSDLEVQPKPRPELDGPLPTVEELKEALEHGRLEVAWQVLALERQLEAAAAAGGMSNEELVWRQSKVEALYVLLCDQVLGVLRRPLEAAPERLSQALAVVSQEELEDRRASGGPLAAALEATRPRRWLQRWRGVVAEVAAERLDAQPATAPEGRSEAESRFLHMGRTMKEDLEVVVERLKPLFPDEFNVVRTYAESYHYHFASHLCALAQFELCERDTYLLLLWVQNLYPNDILNSPKLAQELQGVGLGSLLPPKQIRLLEAMFLSNEVTSVKQLMARALELESQRWTQDVAPQSLDGHCHSELAIDILQIISQGQTKAENITSDVGMQIKQLLLVELAALLRSYQRAFDEFLEKSKLLRNYRVNIMANINNCLFFWTSVEQKWQISHDSLNRLLEPLKDLKAHGFDTLLQSLFLDLKPLFKKFTQTRWANPVETLEEIITTVSSSLPEFSELQDCFREELMETVHLHLVKEYIIRLCKRRLVLKTAEQQQQLARHILANADAIQGFCTENGSTATWLHRALPMIAEIIRLQDSSAIKIEVATYATWYPDFSKGHLNAILAIKGNLPSSEVRSIRNILDINTGVQEPPRPLFSLIKVT.

The interval 9-111 (QGFPGQQSVP…KPRPELDGPL (103 aa)) is disordered. Positions 12-31 (PGQQSVPGTLNFAVSPQKPR) are enriched in polar residues. The segment covering 33–45 (TSEAESETSMSEA) has biased composition (low complexity). Positions 91–107 (QPRLSDLEVQPKPRPEL) are enriched in basic and acidic residues.

It belongs to the SEC6 family.

In terms of biological role, may play a role as a mediator of inflammation and angiogenesis. This is Tumor necrosis factor alpha-induced protein 2 (Tnfaip2) from Mus musculus (Mouse).